The sequence spans 562 residues: MAGWSMVADEDAVDYSKTPKSLDANRSPESVNPESTGFEKKIKELISLFRPLLDSFLAEFCSADGFLPLPAMTGEGRTVDLFNLFLNVTHKGGFDAVSENGSWDEVVQESGLESYDSASAKLIYVKYLDAFGRWLNRVVAGDTDVSSVELSGISDALVARLNGFLSEVKKKYELRKGRPAKELGAELKWFISKTKRRYDKHHVGKESASNDAVKEFQGSKLAERRLEQIMILESVTQECSSPGKRKRECPLETLKWLSDVAKDPCDPSLGIVPDRSEWVSYGSEEPWKQLLLFRASRTNNDSACEKTWQKVQKMHPCLYDDSAGASYNLRERLSYEDYKRGKTGNGSDIGSSDEEDRPCALVGSKFQAKVPEWTGITPESDSKWLGTRIWPLTKEQTKANLLIERDRIGKGRQDPCGCHNPGSIECVKFHITAKRDKLKLELGPAFYMWCFDVMGECTLQYWTDLELKKIKSLMSSPPSLSPAFIHQAKMILPSKSRGKIVSYFYNVTLLQYRASQSRITPHDIDSDTDQIFLRATENENPAPEANTFQKPALLSPNKKRCR.

Positions 43–136 (KELISLFRPL…YLDAFGRWLN (94 aa)) constitute an ARID domain. The ELM2 domain maps to 358–448 (PCALVGSKFQ…KLELGPAFYM (91 aa)).

Its subcellular location is the nucleus. The protein is AT-rich interactive domain-containing protein 1 (ARID1) of Arabidopsis thaliana (Mouse-ear cress).